The sequence spans 417 residues: Probable sugar-binding periplasmic protein (417 aa).

The N-terminal stretch at 1–21 is a signal peptide; the sequence is MLRKLLIGTALATSFAFSAHA.

It belongs to the bacterial solute-binding protein 1 family.

It localises to the periplasm. In terms of biological role, part of a binding-protein-dependent transport system for a sugar. The polypeptide is Probable sugar-binding periplasmic protein (Mesorhizobium japonicum (strain LMG 29417 / CECT 9101 / MAFF 303099) (Mesorhizobium loti (strain MAFF 303099))).